The sequence spans 698 residues: Elongation factor G (698 aa).

Residues 10 to 285 (AATRNIGIMA…AVVDFLPSPT (276 aa)) form the tr-type G domain. GTP contacts are provided by residues 19-26 (AHIDAGKT), 83-87 (DTPGH), and 137-140 (NKMD).

Belongs to the TRAFAC class translation factor GTPase superfamily. Classic translation factor GTPase family. EF-G/EF-2 subfamily.

Its subcellular location is the cytoplasm. Catalyzes the GTP-dependent ribosomal translocation step during translation elongation. During this step, the ribosome changes from the pre-translocational (PRE) to the post-translocational (POST) state as the newly formed A-site-bound peptidyl-tRNA and P-site-bound deacylated tRNA move to the P and E sites, respectively. Catalyzes the coordinated movement of the two tRNA molecules, the mRNA and conformational changes in the ribosome. The polypeptide is Elongation factor G (Parafrankia sp. (strain EAN1pec)).